The sequence spans 498 residues: Probable lysophospholipase BODYGUARD 3 (498 aa).

The N-terminal stretch at 1-55 (MAVMKIKGAATVAGTWLNEAVSFVVFCILDIVDSFLCLLYKAADYLFEAEWKPCY) is a signal peptide. Cysteine 56 is lipidated: N-palmitoyl cysteine. An AB hydrolase-1 domain is found at 220–326 (VLFIHGFISS…LTLLAPPYYP (107 aa)). Histidine 224 is an active-site residue. The active-site Nucleophile is the serine 297. Residues aspartate 446 and histidine 474 each act as charge relay system in the active site.

It is found in the cell membrane. The protein localises to the secreted. It localises to the cell wall. Functionally, involved in cuticle development and morphogenesis. The polypeptide is Probable lysophospholipase BODYGUARD 3 (Arabidopsis thaliana (Mouse-ear cress)).